Consider the following 534-residue polypeptide: Probable inorganic phosphate transporter 1-8 (534 aa).

The Cytoplasmic portion of the chain corresponds to 1–21; the sequence is MPIKVLSSLDVARTQWYHFKA. A helical membrane pass occupies residues 22-42; that stretch reads IIVAGMGLFTDAYDLFCIAPV. Residues 43 to 61 lie on the Extracellular side of the membrane; it reads MKMISHVYYNGDSINTAVL. Residues 62-82 form a helical membrane-spanning segment; sequence STSYAIALLGTATGQLVFGYL. Over 83 to 90 the chain is Cytoplasmic; that stretch reads GDRVGRRR. A helical transmembrane segment spans residues 91-111; sequence VYGLCLIIMILSSFGCGFSVC. Residues 112-123 are Extracellular-facing; sequence TTRRSCVMVSLG. The helical transmembrane segment at 124-144 threads the bilayer; that stretch reads FFRFFLGLGIGGDYPLSATIM. Over 145-153 the chain is Cytoplasmic; the sequence is SEFANKRTR. Residues 154–174 form a helical membrane-spanning segment; that stretch reads GAFIAAVFSMQGLGILVSSAV. The Extracellular portion of the chain corresponds to 175 to 199; that stretch reads TMAVCVAFKRSGGGLEVDAAAPTEA. The helical transmembrane segment at 200-220 threads the bilayer; the sequence is DLAWRLILMIGALPAALTFYW. The Cytoplasmic segment spans residues 221-281; that stretch reads RMLMPETARY…KLFSRCFFRL (61 aa). Residues 282–302 form a helical membrane-spanning segment; the sequence is HGRDLFAASFNWFLVDIVFYT. The Extracellular portion of the chain corresponds to 303-333; the sequence is SNLLLSHIFSHYSKKPSTAENVYDAAFEVAE. Residues 334–354 form a helical membrane-spanning segment; the sequence is LGAIIAACSTIPGYWFTVYFI. Residues 355-361 are Cytoplasmic-facing; that stretch reads DKIGRVK. Residues 362 to 382 form a helical membrane-spanning segment; that stretch reads IQIMGFFFMAVIYLVAGIPYS. The Extracellular segment spans residues 383–396; it reads WYWSKHEHNNKGFM. Residues 397-417 form a helical membrane-spanning segment; it reads VLYGLVFFFCNFGPNTTTFII. Residues 418-431 lie on the Cytoplasmic side of the membrane; sequence PAEHFPARFRSTCH. A helical transmembrane segment spans residues 432–452; sequence GISGAAGKLGAIVGTVGFLWA. The Extracellular segment spans residues 453 to 472; sequence TKKMESDDKNQIYPEVNRMR. A helical transmembrane segment spans residues 473-493; it reads IAFLILGGVCIAGILVTYFFT. Residues 494–534 lie on the Cytoplasmic side of the membrane; the sequence is KETMGRSLEENEHDQDNNAESEDEPQIVDGQSSVSTLLQTR. The disordered stretch occupies residues 501 to 534; the sequence is LEENEHDQDNNAESEDEPQIVDGQSSVSTLLQTR. Residues 510 to 519 are compositionally biased toward acidic residues; sequence NNAESEDEPQ. Serine 514 bears the Phosphoserine mark. A compositionally biased stretch (polar residues) spans 522–534; sequence DGQSSVSTLLQTR.

This sequence belongs to the major facilitator superfamily. Phosphate:H(+) symporter (TC 2.A.1.9) family. In terms of tissue distribution, in roots.

The protein localises to the membrane. In terms of biological role, high-affinity transporter for external inorganic phosphate. In Arabidopsis thaliana (Mouse-ear cress), this protein is Probable inorganic phosphate transporter 1-8 (PHT1-8).